Consider the following 231-residue polypeptide: NADH-ubiquinone oxidoreductase chain 4 (231 aa).

The next 6 membrane-spanning stretches (helical) occupy residues 1–21, 34–54, 63–85, 89–111, 128–148, and 156–176; these read PIAG…YGII, LFLP…LTCL, IAYS…TPWG, AMAL…NTTY, ILPM…AIPP, and LLIM…LGLS.

Belongs to the complex I subunit 4 family.

The protein resides in the mitochondrion membrane. The catalysed reaction is a ubiquinone + NADH + 5 H(+)(in) = a ubiquinol + NAD(+) + 4 H(+)(out). Core subunit of the mitochondrial membrane respiratory chain NADH dehydrogenase (Complex I) that is believed to belong to the minimal assembly required for catalysis. Complex I functions in the transfer of electrons from NADH to the respiratory chain. The immediate electron acceptor for the enzyme is believed to be ubiquinone. The protein is NADH-ubiquinone oxidoreductase chain 4 (MT-ND4) of Crotalus concolor (Midget faded rattlesnake).